We begin with the raw amino-acid sequence, 463 residues long: Type IV secretion system protein PtlD (463 aa).

The signal sequence occupies residues 1-24 (MAGLSRILLSCTLACLLAGQAAQA). A run of 5 helical transmembrane segments spans residues 118–138 (LQPL…YALL), 232–252 (WLLC…LAAS), 253–273 (LLIV…LFLV), 294–314 (ALVF…VLAG), and 333–353 (MLAA…VPLA). Positions 376-410 (AHRQAAARQYAPRPAAAAAAAGPHQAGTYAASATP) are enriched in low complexity. The interval 376–463 (AHRQAAARQY…RVLPRKPNLP (88 aa)) is disordered. Pro residues predominate over residues 411-420 (APAPARPAPS). Residues 441–455 (VRRDDRPAPAPDRRV) are compositionally biased toward basic and acidic residues.

The protein resides in the cell membrane. Component of the type IV secretion system ptl required for secretion of assembled pertussis toxin (PTX) through the outer membrane. This chain is Type IV secretion system protein PtlD (ptlD), found in Bordetella pertussis (strain Tohama I / ATCC BAA-589 / NCTC 13251).